A 117-amino-acid polypeptide reads, in one-letter code: UPF0342 protein LGAS_1451 (117 aa).

This sequence belongs to the UPF0342 family.

The polypeptide is UPF0342 protein LGAS_1451 (Lactobacillus gasseri (strain ATCC 33323 / DSM 20243 / BCRC 14619 / CIP 102991 / JCM 1131 / KCTC 3163 / NCIMB 11718 / NCTC 13722 / AM63)).